A 194-amino-acid polypeptide reads, in one-letter code: FMN-dependent NADH:quinone oxidoreductase (194 aa).

FMN-binding positions include serine 9, 15–17, and 85–88; these read SIS and MYNF.

Belongs to the azoreductase type 1 family. As to quaternary structure, homodimer. The cofactor is FMN.

The catalysed reaction is 2 a quinone + NADH + H(+) = 2 a 1,4-benzosemiquinone + NAD(+). It carries out the reaction N,N-dimethyl-1,4-phenylenediamine + anthranilate + 2 NAD(+) = 2-(4-dimethylaminophenyl)diazenylbenzoate + 2 NADH + 2 H(+). In terms of biological role, quinone reductase that provides resistance to thiol-specific stress caused by electrophilic quinones. Functionally, also exhibits azoreductase activity. Catalyzes the reductive cleavage of the azo bond in aromatic azo compounds to the corresponding amines. This Xanthomonas oryzae pv. oryzae (strain KACC10331 / KXO85) protein is FMN-dependent NADH:quinone oxidoreductase.